The chain runs to 325 residues: ATP phosphoribosyltransferase (325 aa).

It belongs to the ATP phosphoribosyltransferase family. Long subfamily. It depends on Mg(2+) as a cofactor.

It localises to the cytoplasm. It catalyses the reaction 1-(5-phospho-beta-D-ribosyl)-ATP + diphosphate = 5-phospho-alpha-D-ribose 1-diphosphate + ATP. Its pathway is amino-acid biosynthesis; L-histidine biosynthesis; L-histidine from 5-phospho-alpha-D-ribose 1-diphosphate: step 1/9. Its activity is regulated as follows. Feedback inhibited by histidine. Catalyzes the condensation of ATP and 5-phosphoribose 1-diphosphate to form N'-(5'-phosphoribosyl)-ATP (PR-ATP). Has a crucial role in the pathway because the rate of histidine biosynthesis seems to be controlled primarily by regulation of HisG enzymatic activity. The protein is ATP phosphoribosyltransferase of Bradyrhizobium diazoefficiens (strain JCM 10833 / BCRC 13528 / IAM 13628 / NBRC 14792 / USDA 110).